The following is a 330-amino-acid chain: Peroxidase 55 (330 aa).

The signal sequence occupies residues 1–30 (MDIRSDDAKKPMMMWFLGMLLFSMVAESNA). Disulfide bonds link Cys-41–Cys-121, Cys-74–Cys-79, Cys-127–Cys-326, and Cys-206–Cys-238. The Proton acceptor role is filled by His-72. 5 residues coordinate Ca(2+): Asp-73, Val-76, Gly-78, Asp-80, and Ser-82. Pro-169 serves as a coordination point for substrate. His-199 serves as a coordination point for heme b. Thr-200 is a binding site for Ca(2+). Asn-215 carries N-linked (GlcNAc...) asparagine glycosylation. The Ca(2+) site is built by Asp-250, Ser-253, and Asp-258.

Belongs to the peroxidase family. Classical plant (class III) peroxidase subfamily. The cofactor is heme b. Requires Ca(2+) as cofactor. As to expression, slightly expressed in roots.

Its subcellular location is the secreted. It carries out the reaction 2 a phenolic donor + H2O2 = 2 a phenolic radical donor + 2 H2O. Removal of H(2)O(2), oxidation of toxic reductants, biosynthesis and degradation of lignin, suberization, auxin catabolism, response to environmental stresses such as wounding, pathogen attack and oxidative stress. These functions might be dependent on each isozyme/isoform in each plant tissue. The protein is Peroxidase 55 (PER55) of Arabidopsis thaliana (Mouse-ear cress).